A 262-amino-acid polypeptide reads, in one-letter code: Vibriobactin-specific 2,3-dihydro-2,3-dihydroxybenzoate dehydrogenase (262 aa).

Residue 12–36 (LLVGSARGIGFSVLEHLLQAGAQVM) participates in NAD(+) binding. Ser145 is a binding site for substrate. The Proton acceptor role is filled by Tyr158.

The protein belongs to the short-chain dehydrogenases/reductases (SDR) family.

The enzyme catalyses (2S,3S)-2,3-dihydroxy-2,3-dihydrobenzoate + NAD(+) = 2,3-dihydroxybenzoate + NADH + H(+). Its pathway is siderophore biosynthesis; vibriobactin biosynthesis. Involved in an early step of the biosynthesis of the catechol siderophore vibriobactin. Vibriobactin is a chelating compound involved in transporting iron from the bacterial environment into the cell cytoplasm. The sequence is that of Vibriobactin-specific 2,3-dihydro-2,3-dihydroxybenzoate dehydrogenase (vibA) from Vibrio cholerae serotype O1 (strain ATCC 39315 / El Tor Inaba N16961).